The primary structure comprises 70 residues: MYKFRKGLADFLTTVTFFLFMAVGAIFLIPFIAIFFVISLISPEKGLSSSEFNERLDKITNKLNAALSKE.

This is an uncharacterized protein from Enterobacteria phage T4 (Bacteriophage T4).